Consider the following 241-residue polypeptide: Small ribosomal subunit protein uS2 (241 aa).

The protein belongs to the universal ribosomal protein uS2 family.

The protein is Small ribosomal subunit protein uS2 of Salmonella agona (strain SL483).